Here is a 163-residue protein sequence, read N- to C-terminus: Cyanate hydratase (163 aa).

Active-site residues include Arg-103, Glu-106, and Ser-129.

This sequence belongs to the cyanase family.

It catalyses the reaction cyanate + hydrogencarbonate + 3 H(+) = NH4(+) + 2 CO2. In terms of biological role, catalyzes the reaction of cyanate with bicarbonate to produce ammonia and carbon dioxide. The sequence is that of Cyanate hydratase from Ajellomyces capsulatus (strain H143) (Darling's disease fungus).